A 1109-amino-acid polypeptide reads, in one-letter code: Carbamoyl phosphate synthase large chain (1109 aa).

Positions M1 to E402 are carboxyphosphate synthetic domain. R129, R169, G175, G176, E208, I210, E215, G241, V242, H243, Q285, and E299 together coordinate ATP. Residues K133–L328 form the ATP-grasp 1 domain. Residues Q285, E299, and N301 each coordinate Mg(2+). The Mn(2+) site is built by Q285, E299, and N301. The segment at Q403–D546 is oligomerization domain. The carbamoyl phosphate synthetic domain stretch occupies residues E547–N950. Residues S677–T868 form the ATP-grasp 2 domain. The ATP site is built by R713, R752, L754, E759, G784, I785, H786, S787, Q827, and E839. Positions 827, 839, and 841 each coordinate Mg(2+). Q827, E839, and N841 together coordinate Mn(2+). The MGS-like domain occupies N951 to S1096. The allosteric domain stretch occupies residues N951–A1109.

It belongs to the CarB family. Composed of two chains; the small (or glutamine) chain promotes the hydrolysis of glutamine to ammonia, which is used by the large (or ammonia) chain to synthesize carbamoyl phosphate. Tetramer of heterodimers (alpha,beta)4. The cofactor is Mg(2+). Requires Mn(2+) as cofactor.

It catalyses the reaction hydrogencarbonate + L-glutamine + 2 ATP + H2O = carbamoyl phosphate + L-glutamate + 2 ADP + phosphate + 2 H(+). The catalysed reaction is hydrogencarbonate + NH4(+) + 2 ATP = carbamoyl phosphate + 2 ADP + phosphate + 2 H(+). Its pathway is amino-acid biosynthesis; L-arginine biosynthesis; carbamoyl phosphate from bicarbonate: step 1/1. The protein operates within pyrimidine metabolism; UMP biosynthesis via de novo pathway; (S)-dihydroorotate from bicarbonate: step 1/3. In terms of biological role, large subunit of the glutamine-dependent carbamoyl phosphate synthetase (CPSase). CPSase catalyzes the formation of carbamoyl phosphate from the ammonia moiety of glutamine, carbonate, and phosphate donated by ATP, constituting the first step of 2 biosynthetic pathways, one leading to arginine and/or urea and the other to pyrimidine nucleotides. The large subunit (synthetase) binds the substrates ammonia (free or transferred from glutamine from the small subunit), hydrogencarbonate and ATP and carries out an ATP-coupled ligase reaction, activating hydrogencarbonate by forming carboxy phosphate which reacts with ammonia to form carbamoyl phosphate. This chain is Carbamoyl phosphate synthase large chain, found in Pseudarthrobacter chlorophenolicus (strain ATCC 700700 / DSM 12829 / CIP 107037 / JCM 12360 / KCTC 9906 / NCIMB 13794 / A6) (Arthrobacter chlorophenolicus).